The following is a 218-amino-acid chain: Small ribosomal subunit protein uS4 (218 aa).

An S4 RNA-binding domain is found at 111–175 (RRLQTQVLRL…SPLKNESHPE (65 aa)). A disordered region spans residues 192–218 (KAAAEAKQAREKPPERGGGRRKRGGRR). Residues 198-209 (KQAREKPPERGG) are compositionally biased toward basic and acidic residues.

Belongs to the universal ribosomal protein uS4 family. In terms of assembly, part of the 30S ribosomal subunit. Contacts protein S5. The interaction surface between S4 and S5 is involved in control of translational fidelity.

Functionally, one of the primary rRNA binding proteins, it binds directly to 16S rRNA where it nucleates assembly of the body of the 30S subunit. Its function is as follows. With S5 and S12 plays an important role in translational accuracy. The polypeptide is Small ribosomal subunit protein uS4 (Methanosarcina acetivorans (strain ATCC 35395 / DSM 2834 / JCM 12185 / C2A)).